We begin with the raw amino-acid sequence, 310 residues long: Homoserine kinase (310 aa).

Position 91–101 (91–101) interacts with ATP; it reads PIGSGLGSSAC.

This sequence belongs to the GHMP kinase family. Homoserine kinase subfamily.

It localises to the cytoplasm. It carries out the reaction L-homoserine + ATP = O-phospho-L-homoserine + ADP + H(+). The protein operates within amino-acid biosynthesis; L-threonine biosynthesis; L-threonine from L-aspartate: step 4/5. Catalyzes the ATP-dependent phosphorylation of L-homoserine to L-homoserine phosphate. The sequence is that of Homoserine kinase from Shigella flexneri serotype 5b (strain 8401).